A 514-amino-acid polypeptide reads, in one-letter code: MGALLRALLLLVLAQWLLSAVPALAPAPFTLPLQVAGATNHRASAVPGLGTPELPRADGLALALEPVRATANFLAMVDNLQGDSGRGYYLEMLIGTPPQKVQILVDTGSSNFAVAGAPHSYIDTYFDSESSSTYHSKGFDVTVKYTQGSWTGFVGEDLVTIPKGFNSSFLVNIATIFESENFFLPGIKWNGILGLAYAALAKPSSSLETFFDSLVAQAKIPDIFSMQMCGAGLPVAGSGTNGGSLVLGGIEPSLYKGDIWYTPIKEEWYYQIEILKLEIGGQNLNLDCREYNADKAIVDSGTTLLRLPQKVFDAVVEAVARTSLIPEFSDGFWTGAQLACWTNSETPWAYFPKISIYLRDENASRSFRITILPQLYIQPMMGAGFNYECYRFGISSSTNALVIGATVMEGFYVVFDRAQRRVGFAVSPCAEIEGTTVSEISGPFSTEDIASNCVPAQALNEPILWIVSYALMSVCGAILLVLILLLLLPLHCRHAPRDPEVVNDESSLVRHRWK.

Positions 1 to 19 (MGALLRALLLLVLAQWLLS) are cleaved as a signal peptide. Residues 20-62 (AVPALAPAPFTLPLQVAGATNHRASAVPGLGTPELPRADGLAL) constitute a propeptide that is removed on maturation. The Extracellular portion of the chain corresponds to 20 to 469 (AVPALAPAPF…NEPILWIVSY (450 aa)). The Peptidase A1 domain occupies 88-425 (YYLEMLIGTP…DRAQRRVGFA (338 aa)). Asp-106 is a catalytic residue. Asn-166 carries N-linked (GlcNAc...) asparagine glycosylation. Disulfide bonds link Cys-229–Cys-429, Cys-288–Cys-453, and Cys-340–Cys-389. Asp-299 is an active-site residue. Residue Asn-362 is glycosylated (N-linked (GlcNAc...) asparagine). A helical transmembrane segment spans residues 470–490 (ALMSVCGAILLVLILLLLLPL). The Cytoplasmic portion of the chain corresponds to 491–514 (HCRHAPRDPEVVNDESSLVRHRWK).

It belongs to the peptidase A1 family. As to quaternary structure, monomer. Interacts with RTN3 and RTN4. Post-translationally, undergoes autoproteolytic cleavage. In terms of processing, glycosylated. High expression in pancreatic islets. Expressed at much lower levels in the pituitary, colon, and ovaries and is nearly absent from all the other tissues.

The protein resides in the cell membrane. It is found in the golgi apparatus. Its subcellular location is the endoplasmic reticulum. It localises to the endosome. The protein localises to the melanosome. The catalysed reaction is Broad endopeptidase specificity. Cleaves Glu-Val-Asn-Leu-|-Asp-Ala-Glu-Phe in the Swedish variant of Alzheimer's amyloid precursor protein.. Functionally, responsible for the proteolytic processing of the amyloid precursor protein (APP). Cleaves APP, between residues 690 and 691, leading to the generation and extracellular release of beta-cleaved soluble APP, and a corresponding cell-associated C-terminal fragment which is later released by gamma-secretase. It has also been shown that it can cleave APP between residues 671 and 672. Involved in the proteolytic shedding of PMEL at early stages of melanosome biogenesis. Cleaves PMEL within the M-beta fragment to release the amyloidogenic PMEL luminal fragment containing M-alpha and a small portion of M-beta N-terminus. This is a prerequisite step for subsequent processing and assembly of PMEL fibrils into amyloid sheets. Responsible also for the proteolytic processing of CLTRN in pancreatic beta cells. The chain is Beta-secretase 2 (Bace2) from Mus musculus (Mouse).